Reading from the N-terminus, the 138-residue chain is Phosphoribosyl-AMP cyclohydrolase (138 aa).

Residue Asp84 participates in Mg(2+) binding. Cys85 contacts Zn(2+). Positions 86 and 88 each coordinate Mg(2+). Cys102 and Cys109 together coordinate Zn(2+).

It belongs to the PRA-CH family. Homodimer. Requires Mg(2+) as cofactor. Zn(2+) is required as a cofactor.

The protein resides in the cytoplasm. The enzyme catalyses 1-(5-phospho-beta-D-ribosyl)-5'-AMP + H2O = 1-(5-phospho-beta-D-ribosyl)-5-[(5-phospho-beta-D-ribosylamino)methylideneamino]imidazole-4-carboxamide. It participates in amino-acid biosynthesis; L-histidine biosynthesis; L-histidine from 5-phospho-alpha-D-ribose 1-diphosphate: step 3/9. Functionally, catalyzes the hydrolysis of the adenine ring of phosphoribosyl-AMP. This chain is Phosphoribosyl-AMP cyclohydrolase, found in Burkholderia cenocepacia (strain ATCC BAA-245 / DSM 16553 / LMG 16656 / NCTC 13227 / J2315 / CF5610) (Burkholderia cepacia (strain J2315)).